The following is a 156-amino-acid chain: Arginine repressor (156 aa).

The protein belongs to the ArgR family.

It is found in the cytoplasm. Its pathway is amino-acid biosynthesis; L-arginine biosynthesis [regulation]. Its function is as follows. Regulates arginine biosynthesis genes. This is Arginine repressor from Klebsiella pneumoniae (strain 342).